Reading from the N-terminus, the 130-residue chain is Astrocytic phosphoprotein PEA-15 (130 aa).

A DED domain is found at 3–81; the sequence is EYGTLLQDLT…RPDLLTMVVD (79 aa). Residues Ser61, Ser90, Ser104, and Ser116 each carry the phosphoserine modification. Residues 98 to 107 are microtubule-binding; the sequence is KLTRIPSAKK. The microtubule-binding stretch occupies residues 122–129; that stretch reads KLAPPPKK.

In terms of assembly, binds RPS6KA3, MAPK3 and MAPK1. Transient interaction with PLD1 and PLD2. Interacts with CASP8 and FADD. In terms of processing, phosphorylated by protein kinase C and calcium-calmodulin-dependent protein kinase. These phosphorylation events are modulated by neurotransmitters or hormones. Ubiquitously expressed. Most abundant in tissues such as heart, brain, muscle and adipose tissue which utilize glucose as an energy source. Lower expression in glucose-producing tissues. Higher levels of expression are found in tissues from individuals with type 2 diabetes than in controls.

It localises to the cytoplasm. Functionally, blocks Ras-mediated inhibition of integrin activation and modulates the ERK MAP kinase cascade. Inhibits RPS6KA3 activities by retaining it in the cytoplasm. Inhibits both TNFRSF6- and TNFRSF1A-mediated CASP8 activity and apoptosis. Regulates glucose transport by controlling both the content of SLC2A1 glucose transporters on the plasma membrane and the insulin-dependent trafficking of SLC2A4 from the cell interior to the surface. This is Astrocytic phosphoprotein PEA-15 (PEA15) from Homo sapiens (Human).